The following is a 106-amino-acid chain: Large ribosomal subunit protein uL24 (106 aa).

Belongs to the universal ribosomal protein uL24 family. As to quaternary structure, part of the 50S ribosomal subunit.

Its function is as follows. One of two assembly initiator proteins, it binds directly to the 5'-end of the 23S rRNA, where it nucleates assembly of the 50S subunit. Functionally, one of the proteins that surrounds the polypeptide exit tunnel on the outside of the subunit. The chain is Large ribosomal subunit protein uL24 from Spiroplasma kunkelii.